We begin with the raw amino-acid sequence, 762 residues long: Phosphoribosylformylglycinamidine synthase subunit PurL (762 aa).

H58 is an active-site residue. 2 residues coordinate ATP: Y61 and K105. E107 contributes to the Mg(2+) binding site. Substrate contacts are provided by residues 108–111 (SHNH) and R130. H109 (proton acceptor) is an active-site residue. Residue D131 coordinates Mg(2+). Q260 is a binding site for substrate. A Mg(2+)-binding site is contributed by D288. 332–334 (ESQ) contacts substrate. ATP is bound by residues N520 and G557. N558 contributes to the Mg(2+) binding site. S560 contacts substrate.

Belongs to the FGAMS family. Monomer. Part of the FGAM synthase complex composed of 1 PurL, 1 PurQ and 2 PurS subunits.

The protein resides in the cytoplasm. The catalysed reaction is N(2)-formyl-N(1)-(5-phospho-beta-D-ribosyl)glycinamide + L-glutamine + ATP + H2O = 2-formamido-N(1)-(5-O-phospho-beta-D-ribosyl)acetamidine + L-glutamate + ADP + phosphate + H(+). The protein operates within purine metabolism; IMP biosynthesis via de novo pathway; 5-amino-1-(5-phospho-D-ribosyl)imidazole from N(2)-formyl-N(1)-(5-phospho-D-ribosyl)glycinamide: step 1/2. Its function is as follows. Part of the phosphoribosylformylglycinamidine synthase complex involved in the purines biosynthetic pathway. Catalyzes the ATP-dependent conversion of formylglycinamide ribonucleotide (FGAR) and glutamine to yield formylglycinamidine ribonucleotide (FGAM) and glutamate. The FGAM synthase complex is composed of three subunits. PurQ produces an ammonia molecule by converting glutamine to glutamate. PurL transfers the ammonia molecule to FGAR to form FGAM in an ATP-dependent manner. PurS interacts with PurQ and PurL and is thought to assist in the transfer of the ammonia molecule from PurQ to PurL. This is Phosphoribosylformylglycinamidine synthase subunit PurL from Rhodococcus erythropolis (strain PR4 / NBRC 100887).